Reading from the N-terminus, the 628-residue chain is Putative pentatricopeptide repeat-containing protein At3g13770, mitochondrial (628 aa).

A mitochondrion-targeting transit peptide spans 1–19 (MFNLMRLIHRSFSSSPTNY). PPR repeat units lie at residues 51 to 85 (GFHG…RYLP), 86 to 116 (ATYL…MPEK), 117 to 151 (NVVS…DGKP), 152 to 186 (NEFT…NYDS), 187 to 217 (HIFV…LPER), 218 to 252 (DVVS…GMSP), 253 to 287 (NYVT…ELPF), 288 to 318 (YAVL…MPER), 319 to 353 (TAIS…KRVK), 355 to 389 (DAVT…EYGT), and 392 to 422 (GTEH…MPSK). The interval 427-502 (VLGSLLGACR…EPGRSWIQHE (76 aa)) is type E motif. Residues 503-533 (QTLHYFHANDRTHPRREEVLAKMKEISIKMK) form a type E(+) motif region. The type DYW motif stretch occupies residues 534-628 (QAGYVPDLSC…DGICSCGDYW (95 aa)).

The protein belongs to the PPR family. PCMP-H subfamily.

It is found in the mitochondrion. The chain is Putative pentatricopeptide repeat-containing protein At3g13770, mitochondrial (PCMP-H85) from Arabidopsis thaliana (Mouse-ear cress).